Here is a 709-residue protein sequence, read N- to C-terminus: Ribosomal RNA large subunit methyltransferase K/L (709 aa).

The THUMP domain maps to 43 to 154; that stretch reads LAYRITLWTR…NGVITIAMNF (112 aa).

The protein belongs to the methyltransferase superfamily. RlmKL family.

The protein localises to the cytoplasm. The catalysed reaction is guanosine(2445) in 23S rRNA + S-adenosyl-L-methionine = N(2)-methylguanosine(2445) in 23S rRNA + S-adenosyl-L-homocysteine + H(+). It catalyses the reaction guanosine(2069) in 23S rRNA + S-adenosyl-L-methionine = N(2)-methylguanosine(2069) in 23S rRNA + S-adenosyl-L-homocysteine + H(+). Its function is as follows. Specifically methylates the guanine in position 2445 (m2G2445) and the guanine in position 2069 (m7G2069) of 23S rRNA. The chain is Ribosomal RNA large subunit methyltransferase K/L from Shewanella baltica (strain OS155 / ATCC BAA-1091).